A 406-amino-acid polypeptide reads, in one-letter code: Peptidase T (406 aa).

A Zn(2+)-binding site is contributed by His-81. Asp-83 is a catalytic residue. Residue Asp-142 coordinates Zn(2+). Glu-176 acts as the Proton acceptor in catalysis. The Zn(2+) site is built by Glu-177, Asp-199, and His-381.

This sequence belongs to the peptidase M20B family. Zn(2+) is required as a cofactor.

The protein resides in the cytoplasm. It catalyses the reaction Release of the N-terminal residue from a tripeptide.. Functionally, cleaves the N-terminal amino acid of tripeptides. This is Peptidase T from Streptococcus suis (strain 98HAH33).